The following is a 134-amino-acid chain: D-ribose pyranase (134 aa).

H20 acts as the Proton donor in catalysis. Residues D28, H101, and 123 to 125 (YCN) each bind substrate.

It belongs to the RbsD / FucU family. RbsD subfamily. In terms of assembly, homodecamer.

Its subcellular location is the cytoplasm. It carries out the reaction beta-D-ribopyranose = beta-D-ribofuranose. It functions in the pathway carbohydrate metabolism; D-ribose degradation; D-ribose 5-phosphate from beta-D-ribopyranose: step 1/2. Catalyzes the interconversion of beta-pyran and beta-furan forms of D-ribose. This Pseudomonas fluorescens (strain SBW25) protein is D-ribose pyranase.